A 365-amino-acid chain; its full sequence is Eukaryotic translation initiation factor 3 subunit H (365 aa).

The region spanning 15–166 (ILLDSLVVMK…LRAWRLSTAA (152 aa)) is the MPN domain.

This sequence belongs to the eIF-3 subunit H family. Component of the eukaryotic translation initiation factor 3 (eIF-3) complex.

The protein resides in the cytoplasm. Its function is as follows. Component of the eukaryotic translation initiation factor 3 (eIF-3) complex, which is involved in protein synthesis of a specialized repertoire of mRNAs and, together with other initiation factors, stimulates binding of mRNA and methionyl-tRNAi to the 40S ribosome. The eIF-3 complex specifically targets and initiates translation of a subset of mRNAs involved in cell proliferation. In Caenorhabditis elegans, this protein is Eukaryotic translation initiation factor 3 subunit H.